An 846-amino-acid polypeptide reads, in one-letter code: Enhancer of polycomb-like protein 1 (846 aa).

Disordered stretches follow at residues 169 to 204 (FNSK…KGDA), 391 to 466 (TSDE…APDA), 587 to 607 (EKKR…QSPK), 682 to 702 (AADA…PQPN), and 759 to 804 (QVQA…GVKQ). The span at 180 to 203 (VKSDKEQGRGMRVKGKDREKEKGD) shows a compositional bias: basic and acidic residues. Residues 411–426 (PSLSGQTPLTSGQSSS) are compositionally biased toward polar residues. Basic and acidic residues predominate over residues 432 to 452 (TDKDREERAQRERYDAQRNAE). A coiled-coil region spans residues 434–490 (KDREERAQRERYDAQRNAERSGILSGRSNAPDALKERLQALQQKTEEMLARKKEQDA). Positions 686 to 702 (KPPPAPIFQKPPAPQPN) are enriched in pro residues. The span at 759–773 (QVQAQGQGHPQAHLQ) shows a compositional bias: low complexity. Positions 783 to 796 (NGVNSPMPNGQQML) are enriched in polar residues.

It belongs to the enhancer of polycomb family. In terms of assembly, component of the NuA4 histone acetyltransferase complex.

The protein resides in the nucleus. Functionally, component of the NuA4 histone acetyltransferase complex which is involved in transcriptional activation of selected genes principally by acetylation of nucleosomal histone H4 and H2A. The NuA4 complex is also involved in DNA repair. Involved in gene silencing by neighboring heterochromatin, blockage of the silencing spreading along the chromosome, and required for cell cycle progression through G2/M. This chain is Enhancer of polycomb-like protein 1 (EPL1), found in Cryptococcus neoformans var. neoformans serotype D (strain JEC21 / ATCC MYA-565) (Filobasidiella neoformans).